The sequence spans 450 residues: Guanine deaminase (450 aa).

His88 and His90 together coordinate Zn(2+). Residues 90–93 (HAPQ), 218–219 (RF), 245–248 (HLSE), and Asp335 each bind substrate. Residues His245 and Asp335 each contribute to the Zn(2+) site.

This sequence belongs to the metallo-dependent hydrolases superfamily. ATZ/TRZ family. The cofactor is Zn(2+).

It catalyses the reaction guanine + H2O + H(+) = xanthine + NH4(+). The protein operates within purine metabolism; guanine degradation; xanthine from guanine: step 1/1. Catalyzes the hydrolytic deamination of guanine, producing xanthine and ammonia. This chain is Guanine deaminase (guaD), found in Dictyostelium discoideum (Social amoeba).